The primary structure comprises 1306 residues: Clustered mitochondria protein homolog (1306 aa).

The segment covering 1 to 11 has biased composition (low complexity); the sequence is MAVNNEVNNAA. The interval 1–47 is disordered; that stretch reads MAVNNEVNNAASETPTDVSSSSQKLATEETALTNGADHEEEDGGEAG. Positions 12–33 are enriched in polar residues; that stretch reads SETPTDVSSSSQKLATEETALT. In terms of domain architecture, Clu spans 336 to 580; the sequence is DITRTQENYL…RVTPLDITWM (245 aa). 2 disordered regions span residues 630 to 689 and 912 to 956; these read ERKR…QERI and KQSQ…SPAA. Positions 656 to 689 are enriched in basic and acidic residues; sequence EPAKSEEPTENGELAKKSESDEAAEPSKPDQERI. TPR repeat units lie at residues 1032-1065, 1074-1107, and 1116-1149; these read ARVYNSLSMLYYQLDEKEAAMELARKAVIVSERT, LLNYLNLGLIAHASGETKLALTYIKHALDLWKVV, and ITTINNAAVMLQHLKEYHDSRTWFEASLKICEEV. Residues 1275–1306 form a disordered region; the sequence is FIEGSDQSNQNKKRPGRSNPKRRGGAAATAGK. Residues 1285–1298 are compositionally biased toward basic residues; sequence NKKRPGRSNPKRRG.

This sequence belongs to the CLU family. May associate with the eukaryotic translation initiation factor 3 (eIF-3) complex.

The protein localises to the cytoplasm. MRNA-binding protein involved in proper cytoplasmic distribution of mitochondria. The protein is Clustered mitochondria protein homolog of Botryotinia fuckeliana (strain B05.10) (Noble rot fungus).